The chain runs to 343 residues: Methionine synthase (343 aa).

Zn(2+) contacts are provided by H211, C213, E236, and C315.

It belongs to the archaeal MetE family. Requires Zn(2+) as cofactor.

Its pathway is amino-acid biosynthesis; L-methionine biosynthesis via de novo pathway. In terms of biological role, catalyzes the transfer of a methyl group to L-homocysteine resulting in methionine formation. The physiological methyl donor is unknown. The sequence is that of Methionine synthase from Thermoplasma acidophilum (strain ATCC 25905 / DSM 1728 / JCM 9062 / NBRC 15155 / AMRC-C165).